The following is a 201-amino-acid chain: Urease accessory protein UreG (201 aa).

GTP is bound at residue 11-18 (GPVGSGKT).

The protein belongs to the SIMIBI class G3E GTPase family. UreG subfamily. In terms of assembly, homodimer. UreD, UreF and UreG form a complex that acts as a GTP-hydrolysis-dependent molecular chaperone, activating the urease apoprotein by helping to assemble the nickel containing metallocenter of UreC. The UreE protein probably delivers the nickel.

The protein localises to the cytoplasm. Facilitates the functional incorporation of the urease nickel metallocenter. This process requires GTP hydrolysis, probably effectuated by UreG. In Synechococcus sp. (strain CC9902), this protein is Urease accessory protein UreG.